The following is a 93-amino-acid chain: UPF0358 protein LMHCC_1561 (93 aa).

Belongs to the UPF0358 family.

The protein is UPF0358 protein LMHCC_1561 of Listeria monocytogenes serotype 4a (strain HCC23).